The chain runs to 767 residues: 5-methyltetrahydropteroyltriglutamate--homocysteine methyltransferase (767 aa).

5-methyltetrahydropteroyltri-L-glutamate is bound by residues 17–20 (RELK) and lysine 117. L-homocysteine-binding positions include 442 to 444 (IGS) and glutamate 495. L-methionine-binding positions include 442–444 (IGS) and glutamate 495. Residues 526–527 (RC) and tryptophan 572 contribute to the 5-methyltetrahydropteroyltri-L-glutamate site. Aspartate 610 is a binding site for L-homocysteine. Aspartate 610 contacts L-methionine. Glutamate 616 provides a ligand contact to 5-methyltetrahydropteroyltri-L-glutamate. Zn(2+) is bound by residues histidine 653, cysteine 655, and glutamate 677. The active-site Proton donor is the histidine 706. Cysteine 738 serves as a coordination point for Zn(2+).

The protein belongs to the vitamin-B12 independent methionine synthase family. Requires Zn(2+) as cofactor.

It carries out the reaction 5-methyltetrahydropteroyltri-L-glutamate + L-homocysteine = tetrahydropteroyltri-L-glutamate + L-methionine. It functions in the pathway amino-acid biosynthesis; L-methionine biosynthesis via de novo pathway; L-methionine from L-homocysteine (MetE route): step 1/1. Catalyzes the transfer of a methyl group from 5-methyltetrahydrofolate to homocysteine resulting in methionine formation. The sequence is that of 5-methyltetrahydropteroyltriglutamate--homocysteine methyltransferase from Bifidobacterium animalis subsp. lactis (strain AD011).